The chain runs to 326 residues: Lipoyl synthase (326 aa).

The [4Fe-4S] cluster site is built by Cys-74, Cys-79, Cys-85, Cys-100, Cys-104, Cys-107, and Ser-314. A Radical SAM core domain is found at 85 to 303; that stretch reads CFGKGTATFM…EEEAYKMGFT (219 aa).

Belongs to the radical SAM superfamily. Lipoyl synthase family. It depends on [4Fe-4S] cluster as a cofactor.

Its subcellular location is the cytoplasm. It catalyses the reaction [[Fe-S] cluster scaffold protein carrying a second [4Fe-4S](2+) cluster] + N(6)-octanoyl-L-lysyl-[protein] + 2 oxidized [2Fe-2S]-[ferredoxin] + 2 S-adenosyl-L-methionine + 4 H(+) = [[Fe-S] cluster scaffold protein] + N(6)-[(R)-dihydrolipoyl]-L-lysyl-[protein] + 4 Fe(3+) + 2 hydrogen sulfide + 2 5'-deoxyadenosine + 2 L-methionine + 2 reduced [2Fe-2S]-[ferredoxin]. It functions in the pathway protein modification; protein lipoylation via endogenous pathway; protein N(6)-(lipoyl)lysine from octanoyl-[acyl-carrier-protein]: step 2/2. Its function is as follows. Catalyzes the radical-mediated insertion of two sulfur atoms into the C-6 and C-8 positions of the octanoyl moiety bound to the lipoyl domains of lipoate-dependent enzymes, thereby converting the octanoylated domains into lipoylated derivatives. This is Lipoyl synthase from Delftia acidovorans (strain DSM 14801 / SPH-1).